The sequence spans 512 residues: Histidine ammonia-lyase (512 aa).

Positions 142-144 (ASG) form a cross-link, 5-imidazolinone (Ala-Gly). S143 bears the 2,3-didehydroalanine (Ser) mark.

It belongs to the PAL/histidase family. In terms of processing, contains an active site 4-methylidene-imidazol-5-one (MIO), which is formed autocatalytically by cyclization and dehydration of residues Ala-Ser-Gly.

The protein resides in the cytoplasm. The catalysed reaction is L-histidine = trans-urocanate + NH4(+). The protein operates within amino-acid degradation; L-histidine degradation into L-glutamate; N-formimidoyl-L-glutamate from L-histidine: step 1/3. The chain is Histidine ammonia-lyase from Bartonella quintana (strain Toulouse) (Rochalimaea quintana).